Consider the following 397-residue polypeptide: Multidrug resistance protein MdtH (397 aa).

A run of 10 helical transmembrane segments spans residues 11 to 31 (WFLA…MPMI), 71 to 91 (FGAR…FASL), 94 to 114 (AQSG…GCLF), 137 to 157 (LLMM…SWLL), 163 to 183 (YVCL…LLIL), 211 to 231 (LVLI…IFPI), 242 to 262 (AVGW…YPLA), 291 to 311 (FATT…GIVI), 338 to 358 (LGLA…HDYA), and 366 to 386 (LPWL…VNCF).

It belongs to the major facilitator superfamily. DHA1 family. MdtH (TC 2.A.1.2.21) subfamily.

The protein resides in the cell inner membrane. The chain is Multidrug resistance protein MdtH from Aeromonas salmonicida (strain A449).